The following is a 355-amino-acid chain: MNQVRKWNIIGGRVIKTGIAVFLTVLVCEFFNIPTIFAVITAIVTIEPTATDSIKKGLVRFPASTIGSAYAMTFTFFLGHQALSYALAAMFTIVTCQKLRLHAGTLVATLTAVAMIPITADHYFTAFLIRLATTSTGIIVSTVVNFFILPPHYVKTISGCTEELFVKTANVMEEWLTALMDGKVIKKETTYNLSKLTVLLHKAVQFVQYEQKDWKYHRHTKKEMRSFLLVQKQLHLLQQIIYHIDNLARAPIETCDWSQNEKEILRRTIHSIISILRNHCEKIDEEHFKLIDELDKQFWTNKNDLAHCKPNQYHHHFSSESIILFEILSIHDMLEELKQIFEKYESENQLNCSVY.

4 helical membrane-spanning segments follow: residues 19–39, 74–94, 109–129, and 131–151; these read IAVFLTVLVCEFFNIPTIFAV, FTFFLGHQALSYALAAMFTIV, TLTAVAMIPITADHYFTAFLI, and LATTSTGIIVSTVVNFFILPP.

The protein belongs to the UPF0421 family.

The protein resides in the cell membrane. The chain is UPF0421 protein BCE33L2478 from Bacillus cereus (strain ZK / E33L).